The sequence spans 303 residues: Putative deoxyribose-phosphate aldolase (303 aa).

Asp-157 acts as the Proton donor/acceptor in catalysis. Catalysis depends on Lys-220, which acts as the Schiff-base intermediate with acetaldehyde. Residue Lys-256 is the Proton donor/acceptor of the active site.

Belongs to the DeoC/FbaB aldolase family. DeoC type 2 subfamily.

The catalysed reaction is 2-deoxy-D-ribose 5-phosphate = D-glyceraldehyde 3-phosphate + acetaldehyde. The protein operates within carbohydrate degradation; 2-deoxy-D-ribose 1-phosphate degradation; D-glyceraldehyde 3-phosphate and acetaldehyde from 2-deoxy-alpha-D-ribose 1-phosphate: step 2/2. Functionally, catalyzes a reversible aldol reaction between acetaldehyde and D-glyceraldehyde 3-phosphate to generate 2-deoxy-D-ribose 5-phosphate. The protein is Putative deoxyribose-phosphate aldolase of Caenorhabditis elegans.